A 231-amino-acid polypeptide reads, in one-letter code: NKG2-C type II integral membrane protein (231 aa).

Residues 1 to 12 (MNKQRGTFSEVS) show a composition bias toward polar residues. The disordered stretch occupies residues 1-31 (MNKQRGTFSEVSLAQDPKRQQRKPKDNKSSI). At 1-70 (MNKQRGTFSE…CQGLLPPPEK (70 aa)) the chain is on the cytoplasmic side. The segment covering 16 to 28 (DPKRQQRKPKDNK) has biased composition (basic and acidic residues). Residues 71–93 (LTAEVLGIICIVLMATVLKTVVL) traverse the membrane as a helical; Signal-anchor for type II membrane protein segment. Residues 94–231 (IPFLEQNNSF…SKRYYCKHKL (138 aa)) lie on the Extracellular side of the membrane. The N-linked (GlcNAc...) asparagine glycan is linked to Asn100. Positions 116–229 (HCPEEWITYS…GSSKRYYCKH (114 aa)) constitute a C-type lectin domain. 3 cysteine pairs are disulfide-bonded: Cys117–Cys128, Cys145–Cys227, and Cys206–Cys219. The N-linked (GlcNAc...) asparagine glycan is linked to Asn149.

As to quaternary structure, heterodimer with KLRD1; disulfide-linked. KLRD1-KLRC2 receptor complex interacts with TYROBP/DAP12 homodimer; this interaction is necessary for the expression on the cell surface. Natural killer cells.

It is found in the cell membrane. Immune activating receptor involved in self-nonself discrimination. In complex with KLRD1 on cytotoxic lymphocyte subsets, recognizes non-classical major histocompatibility MHC-E loaded with signal sequence-derived peptides from non-classical MHC-G molecules, likely playing a role in the generation and effector functions of adaptive natural killer (NK) cells and in maternal-fetal tolerance during pregnancy. Regulates the effector functions of terminally differentiated cytotoxic lymphocyte subsets, and in particular may play a role in adaptive NK cell response to viral infection. Upon MHC-E-peptide binding, transmits intracellular signals via the adapter protein TYROBP/DAP12, triggering the phosphorylation of proximal signaling molecules and cell activation. In Macaca mulatta (Rhesus macaque), this protein is NKG2-C type II integral membrane protein (KLRC2).